The following is a 185-amino-acid chain: Elongation factor P (185 aa).

Belongs to the elongation factor P family.

It is found in the cytoplasm. Its pathway is protein biosynthesis; polypeptide chain elongation. Involved in peptide bond synthesis. Stimulates efficient translation and peptide-bond synthesis on native or reconstituted 70S ribosomes in vitro. Probably functions indirectly by altering the affinity of the ribosome for aminoacyl-tRNA, thus increasing their reactivity as acceptors for peptidyl transferase. The protein is Elongation factor P of Mesomycoplasma hyopneumoniae (strain J / ATCC 25934 / NCTC 10110) (Mycoplasma hyopneumoniae).